The primary structure comprises 369 residues: Carbamoyl phosphate synthase small chain (369 aa).

The segment at 1-168 (MYGILVLEDG…KKVVKYPAKD (168 aa)) is CPSase. Residues Ser-45, Gly-220, and Gly-222 each contribute to the L-glutamine site. The Glutamine amidotransferase type-1 domain maps to 172 to 364 (SCVVIDCGVK…VALGMKFKQE (193 aa)). Cys-247 acts as the Nucleophile in catalysis. Residues Leu-248, Gln-251, Asn-289, Gly-291, and Phe-292 each coordinate L-glutamine. Active-site residues include His-337 and Glu-339.

This sequence belongs to the CarA family. In terms of assembly, composed of two chains; the small (or glutamine) chain promotes the hydrolysis of glutamine to ammonia, which is used by the large (or ammonia) chain to synthesize carbamoyl phosphate. Tetramer of heterodimers (alpha,beta)4.

It carries out the reaction hydrogencarbonate + L-glutamine + 2 ATP + H2O = carbamoyl phosphate + L-glutamate + 2 ADP + phosphate + 2 H(+). The enzyme catalyses L-glutamine + H2O = L-glutamate + NH4(+). It participates in amino-acid biosynthesis; L-arginine biosynthesis; carbamoyl phosphate from bicarbonate: step 1/1. Its pathway is pyrimidine metabolism; UMP biosynthesis via de novo pathway; (S)-dihydroorotate from bicarbonate: step 1/3. In terms of biological role, small subunit of the glutamine-dependent carbamoyl phosphate synthetase (CPSase). CPSase catalyzes the formation of carbamoyl phosphate from the ammonia moiety of glutamine, carbonate, and phosphate donated by ATP, constituting the first step of 2 biosynthetic pathways, one leading to arginine and/or urea and the other to pyrimidine nucleotides. The small subunit (glutamine amidotransferase) binds and cleaves glutamine to supply the large subunit with the substrate ammonia. The polypeptide is Carbamoyl phosphate synthase small chain (Methanococcus vannielii (strain ATCC 35089 / DSM 1224 / JCM 13029 / OCM 148 / SB)).